The sequence spans 338 residues: CDP-paratose 2-epimerase (338 aa).

Threonine 124 serves as a coordination point for substrate. Catalysis depends on tyrosine 164, which acts as the Proton acceptor.

It belongs to the NAD(P)-dependent epimerase/dehydratase family. Homotetramer. NAD(+) is required as a cofactor.

It catalyses the reaction CDP-alpha-D-paratose = CDP-3,6-dideoxy-alpha-D-mannose. It participates in nucleotide-sugar biosynthesis; CDP-3,6-dideoxy-D-mannose biosynthesis; CDP-3,6-dideoxy-D-mannose from CTP and alpha-D-glucose 1-phosphate: step 5/5. In terms of biological role, catalyzes the isomeration of CDP-paratose to CDP-tyvelose. This chain is CDP-paratose 2-epimerase (rfbE), found in Salmonella typhi.